The following is a 3971-amino-acid chain: Mycosubtilin synthase subunit A (3971 aa).

An acyl-CoA ligase region spans residues 160-479 (EPEADELAFI…ELEDIDLGRV (320 aa)). The 76-residue stretch at 578–653 (TPIHEIETAL…DLAAFLVENH (76 aa)) folds into the Carrier 1 domain. At Ser613 the chain carries O-(pantetheine 4'-phosphoryl)serine. One can recognise a Ketosynthase family 3 (KS3) domain in the interval 669 to 1092 (SKDIAIIGMS…GTNAHVVLEE (424 aa)). Active-site for beta-ketoacyl synthase activity residues include Cys843, His974, and His1014. One can recognise a Carrier 2 domain in the interval 1290–1365 (THIESFLKTV…SVVDYLAENV (76 aa)). Ser1324 carries the O-(pantetheine 4'-phosphoryl)serine modification. The interval 1434-1456 (ESEISQDKTSLSPKSVTAKKNSA) is disordered. Polar residues predominate over residues 1440–1456 (DKTSLSPKSVTAKKNSA). The interval 1529-1856 (IIAERSDGSR…SYFEQSQVPI (328 aa)) is GSA-AT. Lys1759 carries the post-translational modification N6-(pyridoxal phosphate)lysine. Residues 1921 to 1942 (GGFIPEGPDSPNDGGHKEPETY) are disordered. Positions 1938–2240 (EPETYELSPE…NMVPVKNTAS (303 aa)) are condensation 1. Residues 2405 to 2480 (EPENETELQI…ELANFIRGEK (76 aa)) form the Carrier 3 domain. O-(pantetheine 4'-phosphoryl)serine is present on Ser2440. A condensation 2 region spans residues 2492 to 2781 (QKAFYRTSPA…QTMGIRTKPQ (290 aa)). Residues 2937–3823 (PHNDTVCQWF…RNHPAGRKIF (887 aa)) form a domain 1 (asparagine-activating) region. Positions 2967-3364 (TYGQLNERVN…KVEAVQKAVV (398 aa)) are adenylation 1. One can recognise a Carrier 4 domain in the interval 3442–3517 (PPGNEVESKL…QLANMALRME (76 aa)). Position 3477 is an O-(pantetheine 4'-phosphoryl)serine (Ser3477). Residues 3529–3818 (KISYYPVSSA…NTLVIRNHPA (290 aa)) are condensation 3.

The protein belongs to the ATP-dependent AMP-binding enzyme family. The cofactor is pyridoxal 5'-phosphate. It depends on pantetheine 4'-phosphate as a cofactor.

This protein is a multifunctional enzyme, able to activate a long chain fatty acid and link it with the amino acid Asn as part of the synthesis of mycosubtilin. The activation sites consist of individual domains. The sequence is that of Mycosubtilin synthase subunit A (mycA) from Bacillus subtilis.